A 360-amino-acid chain; its full sequence is Peptide chain release factor 1 (360 aa).

The residue at position 235 (Gln235) is an N5-methylglutamine. The tract at residues 284 to 312 (ERQAQAQADTRRNLLGSGDRSDKIRTYNY) is disordered.

It belongs to the prokaryotic/mitochondrial release factor family. Post-translationally, methylated by PrmC. Methylation increases the termination efficiency of RF1.

It localises to the cytoplasm. Peptide chain release factor 1 directs the termination of translation in response to the peptide chain termination codons UAG and UAA. This is Peptide chain release factor 1 from Histophilus somni (strain 129Pt) (Haemophilus somnus).